Reading from the N-terminus, the 208-residue chain is Kininogen-1b (208 aa).

Residues 1-23 form the signal peptide; the sequence is MRLWFCLSFFIVLCLEHFPETLA. Residues 27 to 44 are compositionally biased toward basic and acidic residues; it reads NVPESEEKTEQYLRDLPK. A disordered region spans residues 27–208; sequence NVPESEEKTE…RGKFHSQSHV (182 aa).

This sequence belongs to the bradykinin-related peptide family. In terms of tissue distribution, expressed by the skin glands.

The protein resides in the secreted. Functionally, in vitro, produces constriction of guinea pig ileum smooth muscle. May target bradykinin receptors (BDKRB). This Bombina maxima (Giant fire-bellied toad) protein is Kininogen-1b.